We begin with the raw amino-acid sequence, 98 residues long: Co-chaperonin GroES (98 aa).

This sequence belongs to the GroES chaperonin family. In terms of assembly, heptamer of 7 subunits arranged in a ring. Interacts with the chaperonin GroEL.

Its subcellular location is the cytoplasm. Functionally, together with the chaperonin GroEL, plays an essential role in assisting protein folding. The GroEL-GroES system forms a nano-cage that allows encapsulation of the non-native substrate proteins and provides a physical environment optimized to promote and accelerate protein folding. GroES binds to the apical surface of the GroEL ring, thereby capping the opening of the GroEL channel. This chain is Co-chaperonin GroES, found in Leifsonia xyli subsp. xyli (strain CTCB07).